The sequence spans 375 residues: Nucleosome assembly protein 1-like 4 (375 aa).

Positions 1 to 28 (MAENSLSDGGPADSVEAAKNASNTEKLT) are disordered. A2 is subject to N-acetylalanine. S5, S7, and S49 each carry phosphoserine. A Phosphothreonine modification is found at T51. A phosphoserine mark is found at S53 and S54. At T58 the chain carries Phosphothreonine. K105 carries the N6-acetyllysine modification. S125 is subject to Phosphoserine. The residue at position 146 (K146) is an N6-acetyllysine. The Nuclear localization signal signature appears at 265–271 (IKKKQKH). At S304 the chain carries Phosphoserine. Residues 339-375 (AIEDDDNFEEGEEGEEEELEGDEEGEDEDDADVNPKV) are disordered.

The protein belongs to the nucleosome assembly protein (NAP) family. Interacts with core (H2A, H2B, H3, H4) and linker (H1) histones. Polyglutamylated and polyglycylated. These 2 modifications occur exclusively on glutamate residues and result in either polyglutamate or polyglycine chains on the gamma-carboxyl group. Both modifications can coexist on the same protein on adjacent residues, and lowering polyglycylation levels increases polyglutamylation, and reciprocally. Polyglutamylated by TTLL4. Post-translationally, phosphorylated at the G0/G1 boundary but it is not phosphorylated in S-phase. Phosphorylated protein remains in the cytoplasm in a complex with histones during the G0/G1 transition, whereas dephosphorylation triggers its transport into the nucleus at the G1/S-boundary.

The protein localises to the nucleus. It localises to the cytoplasm. Functionally, acts as a histone chaperone in nucleosome assembly. In condensing spermatids, mediates the loading of the heterodimer composed of histones H2AB1 and H2BC1/TH2B onto the nucleosomes, thereby promoting the replacement of histones to protamine in male germ cells. This chain is Nucleosome assembly protein 1-like 4 (Nap1l4), found in Mus musculus (Mouse).